The primary structure comprises 340 residues: Zinc finger protein 367 (340 aa).

The disordered stretch occupies residues 101 to 140 (GAPQSSASVAAVSGGEDEEEASSPDSGHLKDGIRRGRPRA). Over residues 127 to 140 (GHLKDGIRRGRPRA) the composition is skewed to basic and acidic residues. 2 C2H2-type zinc fingers span residues 157 to 179 (IRCNICNRVFPREKSLQAHKRTH) and 185 to 209 (YLCDYPDCGKAFVQSGQLKTHQRLH). The disordered stretch occupies residues 280–317 (KGKLVQKADQEQQDPLEYLQSDEEDDEKSGAQRRLQEQ). Residues 299–332 (QSDEEDDEKSGAQRRLQEQRERLHGALALIELAN) are a coiled coil. Phosphoserine is present on Ser300. The span at 307–317 (KSGAQRRLQEQ) shows a compositional bias: basic and acidic residues.

The protein belongs to the krueppel C2H2-type zinc-finger protein family. In terms of tissue distribution, expressed in bone marrow and ovary.

It localises to the nucleus. Transcriptional activator. Isoform 1 may be involved in transcriptional activation of erythroid genes. This chain is Zinc finger protein 367 (Znf367), found in Mus musculus (Mouse).